The following is a 367-amino-acid chain: Mating-type protein ALPHA2 (367 aa).

The homeobox; TALE-type DNA-binding region spans 273 to 338 (GADAIDSEKL…NKRRTGAKKR (66 aa)).

It belongs to the TALE/M-ATYP homeobox family. Forms a heterodimer with A1.

The protein resides in the nucleus. Functionally, mating type proteins are sequence specific DNA-binding proteins that act as master switches in yeast differentiation by controlling gene expression in a cell type-specific fashion. Transcriptional corepressor that acts in conjunction with A1 to repress transcription of haploid-specific genes. This Yarrowia lipolytica (strain CLIB 122 / E 150) (Yeast) protein is Mating-type protein ALPHA2 (MATB2).